Reading from the N-terminus, the 367-residue chain is uncharacterized protein (367 aa).

Transmembrane regions (helical) follow at residues 35-55, 61-81, 92-112, and 113-133; these read YVYD…IILW, LALF…TLLV, EVAD…TAAG, and LMFS…PLFL. Disordered stretches follow at residues 177-220, 249-283, and 296-367; these read KLPK…PASI, SNIK…YYTP, and GDIS…SRPK. Over residues 257–274 the composition is skewed to polar residues; that stretch reads NTKSILHTPLNRRSPSGS. Residues 302-312 show a composition bias toward low complexity; the sequence is SSSSTSSKTST. Over residues 323–342 the composition is skewed to basic and acidic residues; sequence SRSERNARHHRNKEDHRQNQ. Basic residues predominate over residues 357–367; sequence PRRKKYRSRPK.

Belongs to the chlamydial CPn_0443/CT_005/TC_0273 family.

It is found in the cell membrane. This is an uncharacterized protein from Chlamydia muridarum (strain MoPn / Nigg).